A 97-amino-acid polypeptide reads, in one-letter code: Co-chaperonin GroES (97 aa).

The protein belongs to the GroES chaperonin family. Heptamer of 7 subunits arranged in a ring. Interacts with the chaperonin GroEL.

Its subcellular location is the cytoplasm. Its function is as follows. Together with the chaperonin GroEL, plays an essential role in assisting protein folding. The GroEL-GroES system forms a nano-cage that allows encapsulation of the non-native substrate proteins and provides a physical environment optimized to promote and accelerate protein folding. GroES binds to the apical surface of the GroEL ring, thereby capping the opening of the GroEL channel. This Baumannia cicadellinicola subsp. Homalodisca coagulata protein is Co-chaperonin GroES.